Reading from the N-terminus, the 264-residue chain is Small ribosomal subunit protein mS23 (264 aa).

Residues 233-264 (ARTSNPAGSWKDDTTLNTAQEEESTTSENLHF) form a disordered region.

It belongs to the mitochondrion-specific ribosomal protein mS23 family. In terms of assembly, component of the mitochondrial small ribosomal subunit. Mature mitochondrial ribosomes consist of a small (37S) and a large (54S) subunit. The 37S subunit contains at least 33 different proteins and 1 molecule of RNA (15S). The 54S subunit contains at least 45 different proteins and 1 molecule of RNA (21S).

The protein localises to the mitochondrion. In Saccharomyces cerevisiae (strain YJM789) (Baker's yeast), this protein is Small ribosomal subunit protein mS23 (RSM25).